A 695-amino-acid polypeptide reads, in one-letter code: Elongation factor G 1 (695 aa).

The tr-type G domain maps to 5 to 280; the sequence is ARYRNIGIFA…AVVDYLPSPT (276 aa). Residues 14 to 21, 78 to 82, and 132 to 135 contribute to the GTP site; these read AHVDAGKT, DTPGH, and NKLD.

Belongs to the TRAFAC class translation factor GTPase superfamily. Classic translation factor GTPase family. EF-G/EF-2 subfamily.

It is found in the cytoplasm. In terms of biological role, catalyzes the GTP-dependent ribosomal translocation step during translation elongation. During this step, the ribosome changes from the pre-translocational (PRE) to the post-translocational (POST) state as the newly formed A-site-bound peptidyl-tRNA and P-site-bound deacylated tRNA move to the P and E sites, respectively. Catalyzes the coordinated movement of the two tRNA molecules, the mRNA and conformational changes in the ribosome. The sequence is that of Elongation factor G 1 from Pseudoalteromonas atlantica (strain T6c / ATCC BAA-1087).